Reading from the N-terminus, the 555-residue chain is Aerobic glycerol-3-phosphate dehydrogenase (555 aa).

24-52 (DLFIIGGGITGAGTALDAASRGMKVALSE) is a binding site for FAD.

It belongs to the FAD-dependent glycerol-3-phosphate dehydrogenase family. The cofactor is FAD.

It localises to the cytoplasm. It carries out the reaction a quinone + sn-glycerol 3-phosphate = dihydroxyacetone phosphate + a quinol. The protein operates within polyol metabolism; glycerol degradation via glycerol kinase pathway; glycerone phosphate from sn-glycerol 3-phosphate (aerobic route): step 1/1. In Bacillus subtilis (strain 168), this protein is Aerobic glycerol-3-phosphate dehydrogenase (glpD).